A 715-amino-acid polypeptide reads, in one-letter code: Metastasis-associated protein MTA1 (715 aa).

Residues Met-1 to Lys-164 enclose the BAH domain. The region spanning Gly-165–Gly-276 is the ELM2 domain. Residue Lys-182 forms a Glycyl lysine isopeptide (Lys-Gly) (interchain with G-Cter in ubiquitin) linkage. The region spanning Asp-283–Arg-335 is the SANT domain. The residue at position 386 (Ser-386) is a Phosphoserine. The GATA-type; atypical zinc finger occupies Cys-393 to Cys-420. The disordered stretch occupies residues Arg-435–Ser-460. 2 positions are modified to phosphoserine: Ser-446 and Ser-449. Residue Lys-509 forms a Glycyl lysine isopeptide (Lys-Gly) (interchain with G-Cter in SUMO2 and SUMO3) linkage. A Phosphoserine modification is found at Ser-522. The short motif at Pro-545–Pro-552 is the SH3-binding element. Lys-549 participates in a covalent cross-link: Glycyl lysine isopeptide (Lys-Gly) (interchain with G-Cter in SUMO2). Residue Thr-564 is modified to Phosphothreonine. Ser-576 is subject to Phosphoserine. Thr-578 is modified (phosphothreonine). Lys-626 is modified (N6-acetyllysine; alternate). A Glycyl lysine isopeptide (Lys-Gly) (interchain with G-Cter in ubiquitin); alternate cross-link involves residue Lys-626. Residue Ser-639 is modified to Phosphoserine. The tract at residues Asp-656–Lys-686 is interaction with RBBP4. The interval Ser-673–Asp-715 is disordered. The SH3-binding signature appears at Leu-696 to Pro-705. The SUMO interaction motif 1 (SIM); crucial for efficient sumoylation signature appears at Ile-711–Asp-715.

This sequence belongs to the metastasis-associated protein family. In terms of assembly, component of the nucleosome remodeling and deacetylase (NuRD) repressor complex, composed of core proteins MTA1, MTA2, MTA3, RBBP4, RBBP7, HDAC1, HDAC2, MBD2, MBD3, and peripherally associated proteins CDK2AP1, CDK2AP2, GATAD2A, GATAD2B, CHD3, CHD4 and CHD5. The exact stoichiometry of the NuRD complex is unknown, and some subunits such as MBD2 and MBD3, GATAD2A and GATAD2B, and CHD3, CHD4 and CHD5 define mutually exclusive NuRD complexes. Interacts with RBBP4; the interaction is direct. Interacts with BMAL1. Interacts with CLOCK. Interacts with COP1. Interacts with CSNK1G2 in the cytoplasm. Interacts with EP300. Interacts with HDAC2. Interacts with IFI16. Interacts with ITGB3BP/CENPR. Interacts with MBD3L2. Interacts with MDM2. Interacts with NACC2. Interacts with p53/TP53. Interacts with PIAS1. Interacts with PIAS3. Interacts with PIAS4. Interacts with PWWP2A. Interacts with PWWP2B. Interacts with SENP1. Interacts with SENP2. Interacts with SIX3; facilitates the binding of SIX3 to the core DNA motif of SIX3 promoter. Interacts with SUMO1. Interacts with SUMO2. Interacts with TFCP2L1; which is indispensable for TFCP2L1-mediated self-renewal-promoting effect and endoderm-inhibiting action. Interacts with TFAP2C. Interacts with TPR. Interacts with UBE2I/UBC9. Post-translationally, phosphorylation by CSNK1G2/CK1 triggered by estrogen enhances corepression of estrogen receptor (ER). Acetylation is essential for its transcriptional coactivator activity. In terms of processing, sumoylation positively regulates its transcriptional corepressor activity but does not affect the protein stability. Sumoylated preferentially by SUMO2 or SUMO3 than SUMO1. Sumoylation is enhanced by PIAS1/3/4 and preferentially sumoylated by SUMO2 in the presence of PIAS1/3/4. Desumoylated by SENP1. Post-translationally, ubiquitinated by COP1, which leads to proteasomal degradation. Widely expressed. High expression in brain, liver, kidney, and cardiac muscle, ovaries, adrenal glands and virgin mammary glands. Higher in tumors than in adjacent normal tissue from the same individual. Up-regulated in a wide variety of cancers including breast, liver, ovarian, and colorectal cancer and its expression levels are closely correlated with tumor aggressiveness and metastasis.

The protein resides in the nucleus. The protein localises to the cytoplasm. It is found in the nucleus envelope. Its subcellular location is the cytoskeleton. In terms of biological role, transcriptional coregulator which can act as both a transcriptional corepressor and coactivator. Acts as a component of the histone deacetylase NuRD complex which participates in the remodeling of chromatin. In the NuRD complex, regulates transcription of its targets by modifying the acetylation status of the target chromatin and cofactor accessibility to the target DNA. In conjunction with other components of NuRD, acts as a transcriptional corepressor of BRCA1, ESR1, TFF1 and CDKN1A. Acts as a transcriptional coactivator of BCAS3, and SUMO2, independent of the NuRD complex. Stimulates the expression of WNT1 by inhibiting the expression of its transcriptional corepressor SIX3. Regulates p53-dependent and -independent DNA repair processes following genotoxic stress. Regulates the stability and function of p53/TP53 by inhibiting its ubiquitination by COP1 and MDM2 thereby regulating the p53-dependent DNA repair. Plays a role in the regulation of the circadian clock and is essential for the generation and maintenance of circadian rhythms under constant light and for normal entrainment of behavior to light-dark (LD) cycles. Positively regulates the CLOCK-BMAL1 heterodimer mediated transcriptional activation of its own transcription and the transcription of CRY1. Regulates deacetylation of BMAL1 by regulating SIRT1 expression, resulting in derepressing CRY1-mediated transcription repression. With TFCP2L1, promotes establishment and maintenance of pluripotency in embryonic stem cells (ESCs) and inhibits endoderm differentiation. Functionally, binds to ESR1 and sequesters it in the cytoplasm and enhances its non-genomic responses. The polypeptide is Metastasis-associated protein MTA1 (MTA1) (Homo sapiens (Human)).